We begin with the raw amino-acid sequence, 340 residues long: Homeobox protein DBX2 (340 aa).

A DNA-binding region (homeobox) is located at residues 185–244 (GILRRAVFSEDQRKALEKMFQKQKYISKTDRKKLAINLGLKESQVKIWFQNRRMKWRNSK). The tract at residues 283-313 (QQHPSPGWRENSPEPSERLIQGSPGAEALPP) is disordered.

This sequence belongs to the H2.0 homeobox family.

The protein localises to the nucleus. The chain is Homeobox protein DBX2 (DBX2) from Bos taurus (Bovine).